Reading from the N-terminus, the 234-residue chain is Purine nucleoside phosphorylase DeoD-type (234 aa).

A purine D-ribonucleoside is bound at residue His4. Phosphate contacts are provided by residues Gly20, Arg24, Arg43, and 87 to 90 (RIGS). A purine D-ribonucleoside-binding positions include Glu162, 179 to 181 (EME), and 203 to 204 (SD). Asp204 acts as the Proton donor in catalysis.

It belongs to the PNP/UDP phosphorylase family. As to quaternary structure, homohexamer; trimer of homodimers.

The catalysed reaction is a purine D-ribonucleoside + phosphate = a purine nucleobase + alpha-D-ribose 1-phosphate. It catalyses the reaction a purine 2'-deoxy-D-ribonucleoside + phosphate = a purine nucleobase + 2-deoxy-alpha-D-ribose 1-phosphate. In terms of biological role, catalyzes the reversible phosphorolytic breakdown of the N-glycosidic bond in the beta-(deoxy)ribonucleoside molecules, with the formation of the corresponding free purine bases and pentose-1-phosphate. This is Purine nucleoside phosphorylase DeoD-type from Roseobacter denitrificans (strain ATCC 33942 / OCh 114) (Erythrobacter sp. (strain OCh 114)).